We begin with the raw amino-acid sequence, 129 residues long: Putative membrane protein insertion efficiency factor (129 aa).

This sequence belongs to the UPF0161 family.

It localises to the cell inner membrane. Functionally, could be involved in insertion of integral membrane proteins into the membrane. This is Putative membrane protein insertion efficiency factor from Rhodopseudomonas palustris (strain ATCC BAA-98 / CGA009).